A 143-amino-acid polypeptide reads, in one-letter code: Transcription antitermination protein NusB (143 aa).

It belongs to the NusB family.

In terms of biological role, involved in transcription antitermination. Required for transcription of ribosomal RNA (rRNA) genes. Binds specifically to the boxA antiterminator sequence of the ribosomal RNA (rrn) operons. This Buchnera aphidicola subsp. Acyrthosiphon pisum (strain 5A) protein is Transcription antitermination protein NusB.